The chain runs to 506 residues: AMP phosphorylase (506 aa).

AMP is bound by residues Gly168, 194–199 (SRAITG), and Thr203. Catalysis depends on Asp256, which acts as the Proton donor. Ser264 and Lys288 together coordinate AMP.

It belongs to the thymidine/pyrimidine-nucleoside phosphorylase family. Type 2 subfamily.

It catalyses the reaction AMP + phosphate = alpha-D-ribose 1,5-bisphosphate + adenine. The catalysed reaction is CMP + phosphate = cytosine + alpha-D-ribose 1,5-bisphosphate. It carries out the reaction UMP + phosphate = alpha-D-ribose 1,5-bisphosphate + uracil. Functionally, catalyzes the conversion of AMP and phosphate to adenine and ribose 1,5-bisphosphate (R15P). Exhibits phosphorylase activity toward CMP and UMP in addition to AMP. Functions in an archaeal AMP degradation pathway, together with R15P isomerase and RubisCO. This chain is AMP phosphorylase, found in Methanococcoides burtonii (strain DSM 6242 / NBRC 107633 / OCM 468 / ACE-M).